The sequence spans 287 residues: 2-dehydro-3-deoxyphosphooctonate aldolase (287 aa).

The protein belongs to the KdsA family.

It localises to the cytoplasm. It carries out the reaction D-arabinose 5-phosphate + phosphoenolpyruvate + H2O = 3-deoxy-alpha-D-manno-2-octulosonate-8-phosphate + phosphate. Its pathway is carbohydrate biosynthesis; 3-deoxy-D-manno-octulosonate biosynthesis; 3-deoxy-D-manno-octulosonate from D-ribulose 5-phosphate: step 2/3. The protein operates within bacterial outer membrane biogenesis; lipopolysaccharide biosynthesis. The polypeptide is 2-dehydro-3-deoxyphosphooctonate aldolase (Rhodopseudomonas palustris (strain BisB5)).